A 352-amino-acid chain; its full sequence is MRPLPDQSAFEDKSELVSKKQKNEDENNENRSPETPRTPKVCPKTPTKTPLRTPTKNQAGVQFLTQKKRTKSCSSHFEYINQIGEGSFAKVYKARSFVDGRLYAVKKSKKPIWETSERNQHIQEIENGMKLGHHNNIAQVMCAWEEGGHIFIQMELCERGNLKDALNLAVQEEGGLGKLPEYMIWQYLCDIANGLSHVHEKGIMHLDIKPENLLFSNDGVLKIGDFGVCSTTTGGDDSEGDQIYMAPELLNDIHTPSADIFSLGITLYEMATNYNLPQKGQWWRNLREGKIPFPENDDSISQDLKDLIILMMNPDHTKRITIQSLLKYDKLQSVITLKRSTSTLYRLQRKLF.

Positions 1–57 are disordered; the sequence is MRPLPDQSAFEDKSELVSKKQKNEDENNENRSPETPRTPKVCPKTPTKTPLRTPTKN. Residues 10–34 show a composition bias toward basic and acidic residues; sequence FEDKSELVSKKQKNEDENNENRSPE. The segment covering 38 to 56 has biased composition (low complexity); the sequence is TPKVCPKTPTKTPLRTPTK. Residues 77–331 enclose the Protein kinase domain; the sequence is FEYINQIGEG…IQSLLKYDKL (255 aa). ATP contacts are provided by residues 83–91 and lysine 106; that span reads IGEGSFAKV. Aspartate 207 (proton acceptor) is an active-site residue. Asparagine 212 and aspartate 225 together coordinate Mg(2+).

It belongs to the protein kinase superfamily. Ser/Thr protein kinase family. WEE1 subfamily.

It catalyses the reaction L-seryl-[protein] + ATP = O-phospho-L-seryl-[protein] + ADP + H(+). The enzyme catalyses L-threonyl-[protein] + ATP = O-phospho-L-threonyl-[protein] + ADP + H(+). The sequence is that of Probable protein kinase DDB_G0291842 from Dictyostelium discoideum (Social amoeba).